A 469-amino-acid polypeptide reads, in one-letter code: Solute carrier family 52, riboflavin transporter, member 3 (469 aa).

Over 1–2 (MA) the chain is Cytoplasmic. A helical transmembrane segment spans residues 3 to 23 (FLMHLLVCVFGMGSWVTINGL). The Extracellular portion of the chain corresponds to 24-43 (WVELPLLVMELPEGWYLPSY). A helical transmembrane segment spans residues 44–64 (LTVVIQLANIGPLLVTLLHHF). Over 65 to 71 (RPSCLSE) the chain is Cytoplasmic. A helical transmembrane segment spans residues 72 to 92 (VPIIFTLLGVGTVTCIIFAFL). Residues 93–97 (WNMTS) are Extracellular-facing. The N-linked (GlcNAc...) asparagine glycan is linked to asparagine 94. A helical membrane pass occupies residues 98-118 (WVLDGHHSIAFLVLTFFLALV). Topologically, residues 119–137 (DCTSSVTFLPFMSRLPTYY) are cytoplasmic. The chain crosses the membrane as a helical span at residues 138–158 (LTTFFVGEGLSGLLPALVALA). The Extracellular segment spans residues 159–220 (QGSGLTTCVN…SRYLPAHFSP (62 aa)). N-linked (GlcNAc...) asparagine glycosylation occurs at asparagine 168. Residues 221–241 (LVFFLLLSIMMACCLVAFFVL) form a helical membrane-spanning segment. Residues 242-292 (QRQPRCWEASVEDLLNDQVTLHSIRPREENDLGPAGTVDSSQGQGYLEEKA) lie on the Cytoplasmic side of the membrane. A Phosphoserine modification is found at serine 251. Residues 293–313 (APCCPAHLAFIYTLVAFVNAL) traverse the membrane as a helical segment. At 314–335 (TNGMLPSVQTYSCLSYGPVAYH) the chain is on the extracellular side. Residues 336–356 (LAATLSIVANPLASLVSMFLP) traverse the membrane as a helical segment. Topologically, residues 357-359 (NRS) are cytoplasmic. The helical transmembrane segment at 360 to 380 (LLFLGVLSVLGTCFGGYNMAM) threads the bilayer. The Extracellular segment spans residues 381 to 396 (AVMSPCPLLQGHWGGE). Residues cysteine 386 and cysteine 463 are joined by a disulfide bond. Residues 397–417 (VLIVASWVLFSGCLSYVKVML) traverse the membrane as a helical segment. The Cytoplasmic portion of the chain corresponds to 418–427 (GVVLRDLSRS). A helical membrane pass occupies residues 428–448 (ALLWCGAAVQLGSLLGALLMF). Topologically, residues 449–469 (PLVNVLRLFSSADFCNLHCPA) are extracellular.

Belongs to the riboflavin transporter family. As to expression, predominantly expressed in testis. Highly expressed in small intestine and prostate.

It is found in the apical cell membrane. The protein localises to the cell membrane. The protein resides in the nucleus membrane. It localises to the cytoplasm. It carries out the reaction riboflavin(in) = riboflavin(out). Activity is strongly inhibited by riboflavin analogs, such as lumiflavin, flavin mononucleotide (FMN), flavin adenine dinucleotide (FAD), by methylene blue, and to a lesser extent by amiloride. Riboflavin transport is Na(+)-independent at low pH but significantly reduced by Na(+) depletion under neutral pH conditions. Its function is as follows. Plasma membrane transporter mediating the uptake by cells of the water soluble vitamin B2/riboflavin that plays a key role in biochemical oxidation-reduction reactions of the carbohydrate, lipid, and amino acid metabolism. Humans are unable to synthesize vitamin B2/riboflavin and must obtain it via intestinal absorption. This is Solute carrier family 52, riboflavin transporter, member 3 (SLC52A3) from Homo sapiens (Human).